The primary structure comprises 155 residues: Protein-export protein SecB (155 aa).

It belongs to the SecB family. As to quaternary structure, homotetramer, a dimer of dimers. One homotetramer interacts with 1 SecA dimer.

It localises to the cytoplasm. One of the proteins required for the normal export of preproteins out of the cell cytoplasm. It is a molecular chaperone that binds to a subset of precursor proteins, maintaining them in a translocation-competent state. It also specifically binds to its receptor SecA. This is Protein-export protein SecB from Albidiferax ferrireducens (strain ATCC BAA-621 / DSM 15236 / T118) (Rhodoferax ferrireducens).